The following is a 60-amino-acid chain: Large ribosomal subunit protein uL30 (60 aa).

This sequence belongs to the universal ribosomal protein uL30 family. In terms of assembly, part of the 50S ribosomal subunit.

In Bacillus cereus (strain G9842), this protein is Large ribosomal subunit protein uL30.